A 72-amino-acid polypeptide reads, in one-letter code: UPF0154 protein BPUM_1692 (72 aa).

Residues 4 to 24 form a helical membrane-spanning segment; it reads WVVILVGVVALLAGVALGFFI.

This sequence belongs to the UPF0154 family.

The protein localises to the cell membrane. The polypeptide is UPF0154 protein BPUM_1692 (Bacillus pumilus (strain SAFR-032)).